The following is a 401-amino-acid chain: Probable aspartic-type endopeptidase TRV_05382 (401 aa).

The first 22 residues, 1–22, serve as a signal peptide directing secretion; sequence MWHSPFFTAFTLFLGFFTLTLA. 2 N-linked (GlcNAc...) asparagine glycosylation sites follow: Asn-80 and Asn-102. The Peptidase A1 domain maps to 94-398; it reads FVNEITIGNN…DHDGPKMGFA (305 aa). Asp-110 is a catalytic residue. A glycan (N-linked (GlcNAc...) asparagine) is linked at Asn-282. Asp-292 is a catalytic residue. A glycan (N-linked (GlcNAc...) asparagine) is linked at Asn-329.

This sequence belongs to the peptidase A1 family.

The protein resides in the secreted. In terms of biological role, probable aspartic-type endopeptidase which contributes to virulence. In Trichophyton verrucosum (strain HKI 0517), this protein is Probable aspartic-type endopeptidase TRV_05382.